We begin with the raw amino-acid sequence, 56 residues long: Small integral membrane protein 39 (56 aa).

A helical transmembrane segment spans residues 33-53 (VVVSAVLALLVLINVVLIFLL).

Its subcellular location is the membrane. The chain is Small integral membrane protein 39 from Homo sapiens (Human).